We begin with the raw amino-acid sequence, 328 residues long: Tryptophan--tRNA ligase (328 aa).

ATP-binding positions include 9–11 (QPS) and 17–18 (GN). The 'HIGH' region motif lies at 10–18 (PSGVITIGN). Asp-132 contacts L-tryptophan. ATP-binding positions include 144–146 (GED), Ile-183, and 192–196 (KMSKS). Residues 192–196 (KMSKS) carry the 'KMSKS' region motif.

This sequence belongs to the class-I aminoacyl-tRNA synthetase family. In terms of assembly, homodimer.

It is found in the cytoplasm. The enzyme catalyses tRNA(Trp) + L-tryptophan + ATP = L-tryptophyl-tRNA(Trp) + AMP + diphosphate + H(+). Inhibited by indolmycin, a competitive inhibitor for tryptophan. Catalyzes the attachment of tryptophan to tRNA(Trp). The polypeptide is Tryptophan--tRNA ligase (Geobacillus stearothermophilus (Bacillus stearothermophilus)).